The primary structure comprises 225 residues: Orotate phosphoribosyltransferase (225 aa).

Residues K26, 73–74, R100, K101, K104, H106, and 127–135 contribute to the 5-phospho-alpha-D-ribose 1-diphosphate site; these read YK and EDVTTAGTS. Orotate is bound by residues T131 and R160.

It belongs to the purine/pyrimidine phosphoribosyltransferase family. PyrE subfamily. As to quaternary structure, homodimer. Mg(2+) is required as a cofactor.

It carries out the reaction orotidine 5'-phosphate + diphosphate = orotate + 5-phospho-alpha-D-ribose 1-diphosphate. Its pathway is pyrimidine metabolism; UMP biosynthesis via de novo pathway; UMP from orotate: step 1/2. Catalyzes the transfer of a ribosyl phosphate group from 5-phosphoribose 1-diphosphate to orotate, leading to the formation of orotidine monophosphate (OMP). This is Orotate phosphoribosyltransferase from Lachnoclostridium phytofermentans (strain ATCC 700394 / DSM 18823 / ISDg) (Clostridium phytofermentans).